The chain runs to 1857 residues: Ankyrin repeat domain-containing protein 31 (1857 aa).

Disordered regions lie at residues 1 to 30 and 195 to 215; these read MENG…EDEE and SEPG…DEES. Residues 195–207 are compositionally biased toward polar residues; that stretch reads SEPGEEVTQTMTS. ANK repeat units lie at residues 475–504, 508–537, and 541–570; these read FGEN…NVNQ, DGWT…DVNV, and YQIT…DPLF. Residues 676-691 are compositionally biased toward polar residues; the sequence is KFGKSNLNSVKNSRTN. 5 disordered regions span residues 676–711, 813–844, 995–1038, 1046–1065, and 1075–1137; these read KFGK…VDDR, VTTH…KGKA, RDSS…TVVH, KAEK…NTDF, and ANSS…QNFR. A compositionally biased stretch (basic residues) spans 692–704; the sequence is VSKRKGQKNRQQK. A compositionally biased stretch (polar residues) spans 814–839; the sequence is TTHQQPHTNQEQYSSPYKSLGNNSSN. A compositionally biased stretch (basic and acidic residues) spans 1008-1019; the sequence is SLERKQDTDKNY. Positions 1023–1032 are enriched in polar residues; it reads GPNTSSSSRP. Residues 1082–1136 show a composition bias toward basic and acidic residues; the sequence is QRKEKENVRKSDAELTHNDSEAERTLKSCEEKKKNMDSETHSPCDIQEHRKDQNF. ANK repeat units lie at residues 1162-1191, 1195-1224, and 1228-1257; these read KGES…DVNL, AGWT…NVNC, and DGIV…NPNQ. Disordered regions lie at residues 1457–1479, 1540–1570, 1609–1640, and 1663–1697; these read NSDI…AHAQ, GGLL…AENS, DPHS…AEPL, and AAAA…TTPR. A compositionally biased stretch (polar residues) spans 1555–1570; that stretch reads ASSSQPAALTPHAENS. Residues 1663–1683 are compositionally biased toward low complexity; it reads AAAASHTDSTQSSLSSASAHQ. Residues 1687 to 1782 form the RAMA domain; the sequence is KTVPHRNTTP…TYLGRELVKC (96 aa).

In terms of assembly, interacts with REC114; the interaction is direct. Interacts with IHO1. Present in meiotic cells (at protein level).

Its subcellular location is the nucleus. It is found in the chromosome. Functionally, required for DNA double-strand breaks (DSBs) formation during meiotic recombination. Regulates the spatial and temporal patterns of pre-DSB recombinosome assembly and recombination activity by acting as a scaffold that anchors REC114 and other factors to specific genomic locations, thereby regulating DSB formation. Plays a key role in recombination in the pseudoautosomal regions of sex chromosomes. The sequence is that of Ankyrin repeat domain-containing protein 31 from Mus musculus (Mouse).